The sequence spans 190 residues: Sec-independent protein translocase protein TatB (190 aa).

A helical membrane pass occupies residues 2–22 (LPDIGGTELLVIAAVALIVVG). The tract at residues 130–190 (IVSKPARKPP…KASTNSDITS (61 aa)) is disordered. The span at 134–144 (PARKPPAKKAA) shows a compositional bias: basic residues. A compositionally biased stretch (low complexity) spans 145–163 (AKPAAKAELVSKPKASAKA).

The protein belongs to the TatB family. The Tat system comprises two distinct complexes: a TatABC complex, containing multiple copies of TatA, TatB and TatC subunits, and a separate TatA complex, containing only TatA subunits. Substrates initially bind to the TatABC complex, which probably triggers association of the separate TatA complex to form the active translocon.

It localises to the cell inner membrane. Its function is as follows. Part of the twin-arginine translocation (Tat) system that transports large folded proteins containing a characteristic twin-arginine motif in their signal peptide across membranes. Together with TatC, TatB is part of a receptor directly interacting with Tat signal peptides. TatB may form an oligomeric binding site that transiently accommodates folded Tat precursor proteins before their translocation. This Caulobacter sp. (strain K31) protein is Sec-independent protein translocase protein TatB.